The sequence spans 593 residues: Histone-arginine methyltransferase CARMER (593 aa).

In terms of domain architecture, SAM-dependent MTase PRMT-type spans 122-429; it reads ASQYFQFYGY…QRQSYDVEMD (308 aa). Gln135, Arg144, Gly168, Glu190, Glu219, and Thr247 together coordinate S-adenosyl-L-methionine. Arg482 bears the Asymmetric dimethylarginine; by autocatalysis mark. A disordered region spans residues 521 to 540; that stretch reads LISSTGRQQSQQQTTPAQPL. Residues 523 to 535 show a composition bias toward low complexity; it reads SSTGRQQSQQQTT.

It belongs to the class I-like SAM-binding methyltransferase superfamily. Protein arginine N-methyltransferase family. As to quaternary structure, homodimer. Post-translationally, the dimethylated protein is the major form.

The protein resides in the cytoplasm. The protein localises to the nucleus. The catalysed reaction is L-arginyl-[protein] + 2 S-adenosyl-L-methionine = N(omega),N(omega)-dimethyl-L-arginyl-[protein] + 2 S-adenosyl-L-homocysteine + 2 H(+). Methylates (mono- and asymmetric dimethylation) the guanidino nitrogens of arginyl residues in proteins. May methylate histone H3 at 'Arg-17' and activate transcription via chromatin remodeling. The polypeptide is Histone-arginine methyltransferase CARMER (Aedes aegypti (Yellowfever mosquito)).